Reading from the N-terminus, the 451-residue chain is Zinc finger MYND domain-containing protein 10 homolog (451 aa).

Residues Cys412, Cys415, Cys423, Cys426, Cys432, Cys436, His444, and Cys448 each contribute to the Zn(2+) site. The segment at 412–448 adopts an MYND-type zinc-finger fold; it reads CATCQAKAKKKCACCKKVHYCSRDCQLKDWPQHKLVC.

The protein belongs to the ZMYND10 family. In terms of tissue distribution, specifically expressed in cells with flagella and motile cilia: chordotonal sensory neurons and sperm.

It localises to the cytoplasm. Its subcellular location is the cell projection. The protein localises to the cilium. It is found in the dynein axonemal particle. Plays a role in axonemal structure organization and motility. May be involved in axonemal pre-assembly of inner and outer dynein arms (IDA and ODA, respectively) for proper axoneme building for cilia motility. This Drosophila melanogaster (Fruit fly) protein is Zinc finger MYND domain-containing protein 10 homolog.